The chain runs to 592 residues: Aspartate--tRNA(Asp/Asn) ligase (592 aa).

Glu-176 is an L-aspartate binding site. The segment at 200–203 (QLYK) is aspartate. Arg-222 provides a ligand contact to L-aspartate. ATP-binding positions include 222 to 224 (RDE) and Gln-231. Residue His-452 participates in L-aspartate binding. Glu-486 contributes to the ATP binding site. Arg-493 is an L-aspartate binding site. 538-541 (GVDR) lines the ATP pocket.

It belongs to the class-II aminoacyl-tRNA synthetase family. Type 1 subfamily. Homodimer.

It localises to the cytoplasm. The catalysed reaction is tRNA(Asx) + L-aspartate + ATP = L-aspartyl-tRNA(Asx) + AMP + diphosphate. Its function is as follows. Aspartyl-tRNA synthetase with relaxed tRNA specificity since it is able to aspartylate not only its cognate tRNA(Asp) but also tRNA(Asn). Reaction proceeds in two steps: L-aspartate is first activated by ATP to form Asp-AMP and then transferred to the acceptor end of tRNA(Asp/Asn). The chain is Aspartate--tRNA(Asp/Asn) ligase from Rhodopirellula baltica (strain DSM 10527 / NCIMB 13988 / SH1).